Reading from the N-terminus, the 542-residue chain is Monocarboxylate transporter 3 (542 aa).

The Cytoplasmic segment spans residues 1-19; it reads MGRADPEEGQLPAPVKPPD. A helical transmembrane segment spans residues 20–40; it reads GGWGWIVLFGCFVITGFSYAF. The Extracellular portion of the chain corresponds to 41–63; sequence PKAVSVYFKELMKDFHVGYSDTA. The chain crosses the membrane as a helical span at residues 64–84; that stretch reads WISSIMLAMLYGTGPVCSIMV. At 85–93 the chain is on the cytoplasmic side; the sequence is NQFGCRPVM. A helical membrane pass occupies residues 94–114; it reads LIGGLLASSGMILASFTTNII. Residues 115 to 119 lie on the Extracellular side of the membrane; the sequence is ELYLT. A helical transmembrane segment spans residues 120 to 140; it reads AGVLTGLGMALNFQPSLIMLG. The Cytoplasmic portion of the chain corresponds to 141-152; the sequence is TYFDKRRPLANG. Residues 153–173 form a helical membrane-spanning segment; sequence LAAAGSPVFLSSLSPLGQVLL. Residues 174–181 are Extracellular-facing; it reads EKFGWRGG. The chain crosses the membrane as a helical span at residues 182 to 202; sequence FLIMGGLLLNCCTCGAVMRPL. Over 203–265 the chain is Cytoplasmic; it reads DAGMKRKTEK…LDFSIFSNRG (63 aa). The interval 226 to 247 is disordered; it reads GGKSEEGISTTDGTKKTKKAKK. The chain crosses the membrane as a helical span at residues 266-286; the sequence is FIIYTISKFILVLGLFVPPIL. Topologically, residues 287–301 are extracellular; it reads LVNYAKDTGVPDTEA. The chain crosses the membrane as a helical span at residues 302-322; the sequence is AFLLSIIGFIDIFARPACGMV. The Cytoplasmic segment spans residues 323 to 330; it reads AGLKWVRP. Residues 331 to 351 traverse the membrane as a helical segment; the sequence is HVAYLFSFAMLFNGLTDICSA. Topologically, residues 352–357 are extracellular; that stretch reads RASNYT. The helical transmembrane segment at 358–378 threads the bilayer; that stretch reads GLVIFCVFFGISYGMVGALQF. Over 379–392 the chain is Cytoplasmic; sequence EVLMAIVGSQKFSS. The helical transmembrane segment at 393–413 threads the bilayer; that stretch reads AIGLVLLIEAFAVLIGPPSAG. Residues 414-423 lie on the Extracellular side of the membrane; it reads RLVDALKNYE. A helical membrane pass occupies residues 424–444; sequence VIFYLAGSEVVLSALFLAMAT. Residues 445–542 lie on the Cytoplasmic side of the membrane; the sequence is YCCLNRGKKT…ADQTVERDSF (98 aa). The tract at residues 453-542 is disordered; sequence KTPPPEKNPS…ADQTVERDSF (90 aa). 2 basolateral sorting signal regions span residues 465 to 510 and 511 to 532; these read GGSD…VEDE and QSGE…AGCN. A compositionally biased stretch (acidic residues) spans 468-478; that stretch reads DTEEAESDVQE.

The protein belongs to the major facilitator superfamily. Monocarboxylate porter (TC 2.A.1.13) family. As to expression, retinal pigment epithelium.

Its subcellular location is the basolateral cell membrane. It carries out the reaction (S)-lactate(in) + H(+)(in) = (S)-lactate(out) + H(+)(out). Its function is as follows. Probable retinal pigment epithelium (RPE)-specific proton-coupled L-lactate transporter. May facilitate transport of lactate and H(+) out of the retina and could therefore play a role in pH and ion homeostasis of the outer retina. The chain is Monocarboxylate transporter 3 (SLC16A8) from Gallus gallus (Chicken).